A 247-amino-acid polypeptide reads, in one-letter code: tRNA (guanine-N(1)-)-methyltransferase (247 aa).

Residues Gly-113 and 133–138 (IGDFVM) each bind S-adenosyl-L-methionine.

The protein belongs to the RNA methyltransferase TrmD family. As to quaternary structure, homodimer.

It is found in the cytoplasm. It catalyses the reaction guanosine(37) in tRNA + S-adenosyl-L-methionine = N(1)-methylguanosine(37) in tRNA + S-adenosyl-L-homocysteine + H(+). Its function is as follows. Specifically methylates guanosine-37 in various tRNAs. This chain is tRNA (guanine-N(1)-)-methyltransferase, found in Vibrio cholerae serotype O1 (strain ATCC 39541 / Classical Ogawa 395 / O395).